Here is a 952-residue protein sequence, read N- to C-terminus: Glycine dehydrogenase (decarboxylating) (952 aa).

Position 703 is an N6-(pyridoxal phosphate)lysine (K703).

Belongs to the GcvP family. The glycine cleavage system is composed of four proteins: P, T, L and H. Pyridoxal 5'-phosphate is required as a cofactor.

It catalyses the reaction N(6)-[(R)-lipoyl]-L-lysyl-[glycine-cleavage complex H protein] + glycine + H(+) = N(6)-[(R)-S(8)-aminomethyldihydrolipoyl]-L-lysyl-[glycine-cleavage complex H protein] + CO2. Functionally, the glycine cleavage system catalyzes the degradation of glycine. The P protein binds the alpha-amino group of glycine through its pyridoxal phosphate cofactor; CO(2) is released and the remaining methylamine moiety is then transferred to the lipoamide cofactor of the H protein. In Mycobacterium leprae (strain Br4923), this protein is Glycine dehydrogenase (decarboxylating).